The following is a 253-amino-acid chain: Probable transcriptional regulatory protein A1G_04400 (253 aa).

Residues 1 to 21 (MAGHSKFKNIQHRKGAQDKKR) are disordered.

Belongs to the TACO1 family.

It is found in the cytoplasm. The chain is Probable transcriptional regulatory protein A1G_04400 from Rickettsia rickettsii (strain Sheila Smith).